A 325-amino-acid polypeptide reads, in one-letter code: Aldo-keto reductase family 1 member A1 (325 aa).

At Thr-2 the chain carries N-acetylthreonine. Ser-4 bears the Phosphoserine mark. NADP(+)-binding positions include Gly-11–Gly-20, Thr-21, and Trp-22. Ser-38 carries the post-translational modification Phosphoserine. Asp-45 lines the NADP(+) pocket. Tyr-50 (proton donor) is an active-site residue. Lys-127 bears the N6-acetyllysine; alternate mark. Lys-127 is subject to N6-succinyllysine; alternate. Lys-145 is subject to N6-succinyllysine. NADP(+) contacts are provided by Ser-162, Asn-163, Ser-211, Leu-213, Ser-215, Ser-216, Lys-263, Ser-264, Ile-265, Arg-269, Gln-272, and Asn-273. Ser-211 carries the phosphoserine modification.

This sequence belongs to the aldo/keto reductase family. In terms of assembly, monomer. As to expression, widely expressed.

Its subcellular location is the cytoplasm. The protein resides in the cytosol. It localises to the apical cell membrane. The catalysed reaction is a primary alcohol + NADP(+) = an aldehyde + NADPH + H(+). The enzyme catalyses L-gulonate + NADP(+) = aldehydo-D-glucuronate + NADPH + H(+). It carries out the reaction L-gulono-1,4-lactone + NADP(+) = D-glucurono-3,6-lactone + NADPH + H(+). It catalyses the reaction allyl alcohol + NADP(+) = acrolein + NADPH + H(+). The catalysed reaction is glycerol + NADP(+) = D-glyceraldehyde + NADPH + H(+). The enzyme catalyses glycerol + NADP(+) = L-glyceraldehyde + NADPH + H(+). It carries out the reaction hydroxyacetone + NADP(+) = methylglyoxal + NADPH + H(+). It catalyses the reaction 3-deoxyfructose + NADP(+) = 3-deoxyglucosone + NADPH + H(+). The catalysed reaction is (R)-mevalonate + NADP(+) = (R)-mevaldate + NADPH + H(+). The enzyme catalyses pyridine 3-methanol + NADP(+) = pyridine-3-carbaldehyde + NADPH + H(+). It carries out the reaction S-nitroso-CoA + NADPH + H(+) = sulfinamide-CoA + NADP(+). It catalyses the reaction S-nitrosoglutathione + NADPH + H(+) = S-(hydroxysulfenamide)glutathione + NADP(+). Catalyzes the NADPH-dependent reduction of a wide variety of carbonyl-containing compounds to their corresponding alcohols. Displays enzymatic activity towards endogenous metabolites such as aromatic and aliphatic aldehydes, ketones, monosaccharides and bile acids, with a preference for negatively charged substrates, such as glucuronate and succinic semialdehyde. Plays an important role in ascorbic acid biosynthesis by catalyzing the reduction of D-glucuronic acid and D-glucurono-gamma-lactone. Functions as a detoxifiying enzyme by reducing a range of toxic aldehydes. Reduces methylglyoxal and 3-deoxyglucosone, which are present at elevated levels under hyperglycemic conditions and are cytotoxic. Involved in the detoxification of lipid-derived aldehydes like acrolein. Plays a role in the activation of procarcinogens, such as polycyclic aromatic hydrocarbon trans-dihydrodiols, and in the metabolism of various xenobiotics and drugs. Also acts as an inhibitor of protein S-nitrosylation by mediating degradation of S-nitroso-coenzyme A (S-nitroso-CoA), a cofactor required to S-nitrosylate proteins. S-nitroso-CoA reductase activity is involved in reprogramming intermediary metabolism in renal proximal tubules, notably by inhibiting protein S-nitrosylation of isoform 2 of PKM (PKM2). Also acts as a S-nitroso-glutathione reductase by catalyzing the NADPH-dependent reduction of S-nitrosoglutathione. Displays no reductase activity towards retinoids. In Mus musculus (Mouse), this protein is Aldo-keto reductase family 1 member A1.